A 622-amino-acid chain; its full sequence is Meiotic expression up-regulated protein 25 (622 aa).

This is Meiotic expression up-regulated protein 25 (meu25) from Schizosaccharomyces pombe (strain 972 / ATCC 24843) (Fission yeast).